A 233-amino-acid polypeptide reads, in one-letter code: B-cell lymphoma/leukemia 10 (233 aa).

Residue Met1 is modified to N-acetylmethionine. One can recognise a CARD domain in the interval Leu13–Asp101. Glycyl lysine isopeptide (Lys-Gly) (interchain with G-Cter in ubiquitin) cross-links involve residues Lys17, Lys31, and Lys63. At Ser138 the chain carries Phosphoserine. The segment at Phe187–Gln233 is disordered. Over residues Pro195–Pro205 the composition is skewed to pro residues.

Homomultimer; homooligomerized following recruitment by CARD domain-containing proteins that form a nucleating helical template that recruits BCL10 via CARD-CARD interaction. Self-associates by CARD-CARD interaction and interacts with other CARD-proteins such as CARD9, CARD10, CARD11 and CARD14. Forms a complex with CARD14 and MALT1; resulting in the formation of a CBM (CARD14-BCL10-MALT1) complex. Forms a complex with CARD11 and MALT1; resulting in the formation of a CBM (CARD11-BCL10-MALT1) complex. Forms a complex with CARD9 and MALT1; resulting in the formation of a CBM (CARD9-BCL10-MALT1) complex. Found in a membrane raft complex, at least composed of BCL10, CARD11, DPP4 and IKBKB. Binds caspase-9 with its C-terminal domain. Interacts with TRAF2 and BIRC2/c-IAP2. Interacts with PELI2 and SOCS3; these interactions may be mutually exclusive. In terms of processing, phosphorylated. Phosphorylation results in dissociation from TRAF2 and binding to BIRC2/c-IAP2. Phosphorylated by IKBKB/IKKB. Post-translationally, ubiquitinated via both 'Lys-63'-linked and linear ('Met-1'-linked) polyubiquitin chains in response to T-cell receptor (TCR) activation. Ubiquitination is recognized by IKBKG/NEMO, the regulatory subunit of I-kappa-B kinase (IKK), and is required for TCR-induced NF-kappa-B activation. Linear ubiquitination at Lys-17, Lys-31 and Lys-63 is mediated by RNF31/HOIP; linear ubiquitination is recognized with much higher affinity than 'Lys-63'-linked ubiquitin by IKBKG/NEMO. CARD11 is required for linear ubiquitination by HOIP by promoting the targeting of BCL10 to RNF31/HOIP. Proteolytically cleaved by MALT1; required for T-cell activation. In terms of tissue distribution, ubiquitous.

The protein resides in the cytoplasm. It localises to the perinuclear region. It is found in the membrane raft. In terms of biological role, plays a key role in both adaptive and innate immune signaling by bridging CARD domain-containing proteins to immune activation. Acts by channeling adaptive and innate immune signaling downstream of CARD domain-containing proteins CARD9, CARD11 and CARD14 to activate NF-kappa-B and MAP kinase p38 (MAPK11, MAPK12, MAPK13 and/or MAPK14) pathways which stimulate expression of genes encoding pro-inflammatory cytokines and chemokines. Recruited by activated CARD domain-containing proteins: homooligomerized CARD domain-containing proteins form a nucleating helical template that recruits BCL10 via CARD-CARD interaction, thereby promoting polymerization of BCL10, subsequent recruitment of MALT1 and formation of a CBM complex. This leads to activation of NF-kappa-B and MAP kinase p38 (MAPK11, MAPK12, MAPK13 and/or MAPK14) pathways which stimulate expression of genes encoding pro-inflammatory cytokines and chemokines. Activated by CARD9 downstream of C-type lectin receptors; CARD9-mediated signals are essential for antifungal immunity. Activated by CARD11 downstream of T-cell receptor (TCR) and B-cell receptor (BCR). Promotes apoptosis, pro-caspase-9 maturation and activation of NF-kappa-B via NIK and IKK. The protein is B-cell lymphoma/leukemia 10 of Homo sapiens (Human).